The chain runs to 274 residues: Enoyl-CoA isomerase/hydratase fer4 (274 aa).

Substrate is bound by residues 77–81 (AGADL) and G124. Positions 79-109 (ADLKERREMSEAEVIEFLQDLRHMLEQVEKL) form a coiled coil.

It belongs to the enoyl-CoA hydratase/isomerase family.

The catalysed reaction is a (3S)-3-hydroxyacyl-CoA = a (2E)-enoyl-CoA + H2O. The enzyme catalyses a 4-saturated-(3S)-3-hydroxyacyl-CoA = a (3E)-enoyl-CoA + H2O. It functions in the pathway siderophore biosynthesis. Its function is as follows. Enoyl-CoA isomerase/hydratase; part of the gene cluster that mediates the biosynthesis of siderophore ferrichrome A which is contributing to organismal virulence. The first step of ferrichrome A biosynthesis is performed by the HMG-CoA synthase hcs1 which catalyzes the generation of HMG-CoA and CoA using acetoacetyl-CoA and acetyl-CoA as substrates. The enoyl-CoA isomerase/hydratase fer4 then catalyzes the conversion of hcs1-produced HMG-CoA to methylglutaconyl-CoA. The acyltransferase fer5 then fuses the fer4-generated methylglutaconyl-CoA with sid1-generated hydroxyornithine to yield methylglutaconyl hydroxyornithine. Methylglutaconyl hydroxyornithine is then available for use by the NRPS fer3 to generate ferrichrome A. The sequence is that of Enoyl-CoA isomerase/hydratase fer4 from Mycosarcoma maydis (Corn smut fungus).